Consider the following 846-residue polypeptide: Translation initiation factor IF-2 (846 aa).

Residues 94–263 (QRSPEEIQAE…HGFQNPTGPV (170 aa)) are disordered. The segment covering 96–135 (SPEEIQAEQKRELEERRAAENAARDKVEAEVRQRNEEQAR) has biased composition (basic and acidic residues). Composition is skewed to low complexity over residues 136–148 (RQAA…APAP) and 158–176 (AAPV…ASED). Basic and acidic residues-rich tracts occupy residues 177-206 (AAAR…RGEA) and 230-239 (TTDEESDGAR). A compositionally biased stretch (basic residues) spans 240–253 (RGRGGKSKLKKRNQ). In terms of domain architecture, tr-type G spans 346–513 (SRAPVVTVMG…AVLLQAEILE (168 aa)). Positions 355-362 (GHVDHGKT) are G1. 355-362 (GHVDHGKT) provides a ligand contact to GTP. Residues 380–384 (GITQH) are G2. Residues 401 to 404 (DTPG) are G3. GTP is bound by residues 401 to 405 (DTPGH) and 455 to 458 (NKID). Residues 455–458 (NKID) form a G4 region. Residues 491–493 (SAK) form a G5 region.

The protein belongs to the TRAFAC class translation factor GTPase superfamily. Classic translation factor GTPase family. IF-2 subfamily.

The protein localises to the cytoplasm. Functionally, one of the essential components for the initiation of protein synthesis. Protects formylmethionyl-tRNA from spontaneous hydrolysis and promotes its binding to the 30S ribosomal subunits. Also involved in the hydrolysis of GTP during the formation of the 70S ribosomal complex. This Pseudomonas putida (strain ATCC 700007 / DSM 6899 / JCM 31910 / BCRC 17059 / LMG 24140 / F1) protein is Translation initiation factor IF-2.